An 833-amino-acid chain; its full sequence is Coiled-coil domain-containing protein 110 (833 aa).

The stretch at 431-778 (LQNYLKESVQ…REYLNLSDKI (348 aa)) forms a coiled coil.

It is found in the nucleus. The sequence is that of Coiled-coil domain-containing protein 110 (CCDC110) from Macaca fascicularis (Crab-eating macaque).